Reading from the N-terminus, the 295-residue chain is UDP-N-acetylenolpyruvoylglucosamine reductase (295 aa).

Positions 24–188 (KVGGDAEIFF…LKAVFKVNKG (165 aa)) constitute an FAD-binding PCMH-type domain. Arg168 is an active-site residue. Ser217 functions as the Proton donor in the catalytic mechanism. Glu287 is an active-site residue.

It belongs to the MurB family. FAD serves as cofactor.

It localises to the cytoplasm. It carries out the reaction UDP-N-acetyl-alpha-D-muramate + NADP(+) = UDP-N-acetyl-3-O-(1-carboxyvinyl)-alpha-D-glucosamine + NADPH + H(+). It participates in cell wall biogenesis; peptidoglycan biosynthesis. Cell wall formation. The protein is UDP-N-acetylenolpyruvoylglucosamine reductase of Rickettsia akari (strain Hartford).